The primary structure comprises 102 residues: Turripeptide OL55-like (102 aa).

In terms of processing, contains 8 disulfide bonds. Expressed by the venom duct.

It is found in the secreted. Acts as a neurotoxin by inhibiting an ion channel. The polypeptide is Turripeptide OL55-like (Lophiotoma acuta (Marbled turris)).